A 486-amino-acid polypeptide reads, in one-letter code: Maintenance of mitochondrial morphology protein 1 (486 aa).

The Lumenal portion of the chain corresponds to 1 to 19; it reads MSNDTSAQPAQSSLSFTQG. A helical transmembrane segment spans residues 20–40; sequence LLVGQLSVVLLIGAFIKFFIF. Over 41-486 the chain is Cytoplasmic; that stretch reads GEASPSSSRS…GSLPDVVPVT (446 aa). Disordered regions lie at residues 45–98, 269–318, 393–412, and 420–486; these read PSSS…RSIL, QTST…AGTT, VRGQ…GVST, and ARDA…VPVT. Residues 51 to 61 are compositionally biased toward basic residues; sequence QTRRTSPHKRS. The span at 70–79 shows a compositional bias: basic and acidic residues; that stretch reads LGSRSLKEKP. Composition is skewed to polar residues over residues 80–96, 269–291, 307–318, and 401–412; these read SSNV…NTRS, QTST…NDYS, EQATQANNAGTT, and EVGSSGNAGVST. Residues 125-382 form the SMP-LTD domain; sequence QPESLDWFNV…EPRVQVVALP (258 aa). 2 stretches are compositionally biased toward basic and acidic residues: residues 429-440 and 462-473; these read HATRDADMEGLR and DSREQACRDDPF.

This sequence belongs to the MMM1 family. As to quaternary structure, homodimer. Component of the ER-mitochondria encounter structure (ERMES) or MDM complex, composed of MMM1, MDM10, MDM12 and MDM34. An MMM1 homodimer associates with one molecule of MDM12 on each side in a pairwise head-to-tail manner, and the SMP-LTD domains of MMM1 and MDM12 generate a continuous hydrophobic tunnel for phospholipid trafficking.

Its subcellular location is the endoplasmic reticulum membrane. Functionally, component of the ERMES/MDM complex, which serves as a molecular tether to connect the endoplasmic reticulum (ER) and mitochondria. Components of this complex are involved in the control of mitochondrial shape and protein biogenesis, and function in nonvesicular lipid trafficking between the ER and mitochondria. The MDM12-MMM1 subcomplex functions in the major beta-barrel assembly pathway that is responsible for biogenesis of all outer membrane beta-barrel proteins, and acts in a late step after the SAM complex. The MDM10-MDM12-MMM1 subcomplex further acts in the TOM40-specific pathway after the action of the MDM12-MMM1 complex. Essential for establishing and maintaining the structure of mitochondria and maintenance of mtDNA nucleoids. This chain is Maintenance of mitochondrial morphology protein 1, found in Coccidioides immitis (strain RS) (Valley fever fungus).